The sequence spans 161 residues: UPF0262 protein mll6455 (161 aa).

This sequence belongs to the UPF0262 family.

In Mesorhizobium japonicum (strain LMG 29417 / CECT 9101 / MAFF 303099) (Mesorhizobium loti (strain MAFF 303099)), this protein is UPF0262 protein mll6455.